We begin with the raw amino-acid sequence, 21 residues long: Peptide Hact-2 (21 aa).

Disulfide bonds link Cys-1–Cys-18, Cys-5–Cys-14, and Cys-9–Cys-20.

In terms of tissue distribution, expressed in tentacles.

It is found in the nematocyst. The protein localises to the secreted. Peptide of unknown function. Does not exhibit antimicrobial activity against Escherichia coli and Staphylococcus aureus. Promotes cell proliferation of human fibroblast skin cells. Does not exhibit any effect on voltage-gated ion channels, including potassium, sodium, and calcium channels. This chain is Peptide Hact-2, found in Heliofungia actiniformis (Mushroom coral).